The following is a 110-amino-acid chain: Late cornified envelope protein 2C (110 aa).

The span at Met-1 to Cys-10 shows a compositional bias: low complexity. The disordered stretch occupies residues Met-1 to Lys-23. Residues Gln-11–Lys-23 show a composition bias toward pro residues.

Belongs to the LCE family. Interacts with CYSRT1; the interaction is direct. Skin-specific. Expression was readily detected in adult trunk skin, adult arm skin, fetal skin, penal skin, vulva, esophagus and tongue. Not expressed in the cervix, rectum, lung, colon, or placenta.

Functionally, precursors of the cornified envelope of the stratum. This is Late cornified envelope protein 2C (LCE2C) from Homo sapiens (Human).